A 697-amino-acid polypeptide reads, in one-letter code: Hormonally up-regulated neu tumor-associated kinase homolog (697 aa).

The 259-residue stretch at 55-313 folds into the Protein kinase domain; the sequence is YLIGRKLGEG…IQQALANRWL (259 aa). Residues 61-69 and K84 each bind ATP; that span reads LGEGSFAKV. D179 functions as the Proton acceptor in the catalytic mechanism. Basic and acidic residues-rich tracts occupy residues 405-424 and 460-473; these read KMNK…KRGE and PVKE…ERES. Disordered regions lie at residues 405-480 and 586-642; these read KMNK…LSPF and DNTS…NCVR. Over residues 586–600 the composition is skewed to polar residues; sequence DNTSPIKGHSNQASF. Over residues 607-626 the composition is skewed to low complexity; sequence SPSSPESMSPTSPHSPHSPS. The span at 627-637 shows a compositional bias: polar residues; it reads CNNNISGNLGS.

Belongs to the protein kinase superfamily. CAMK Ser/Thr protein kinase family. SNF1 subfamily.

The catalysed reaction is L-seryl-[protein] + ATP = O-phospho-L-seryl-[protein] + ADP + H(+). The enzyme catalyses L-threonyl-[protein] + ATP = O-phospho-L-threonyl-[protein] + ADP + H(+). The sequence is that of Hormonally up-regulated neu tumor-associated kinase homolog (hunk) from Xenopus tropicalis (Western clawed frog).